The chain runs to 520 residues: UDP-N-acetylmuramoyl-L-alanyl-D-glutamate--2,6-diaminopimelate ligase (520 aa).

Residue Leu-48 coordinates UDP-N-acetyl-alpha-D-muramoyl-L-alanyl-D-glutamate. An ATP-binding site is contributed by 134–140 (GTSGKTT). Residues 176–177 (TT), Ser-203, and Arg-211 contribute to the UDP-N-acetyl-alpha-D-muramoyl-L-alanyl-D-glutamate site. The residue at position 243 (Lys-243) is an N6-carboxylysine. Meso-2,6-diaminopimelate contacts are provided by residues Arg-405, 429–432 (DNPR), Gly-483, and Glu-487. The short motif at 429–432 (DNPR) is the Meso-diaminopimelate recognition motif element.

The protein belongs to the MurCDEF family. MurE subfamily. The cofactor is Mg(2+). In terms of processing, carboxylation is probably crucial for Mg(2+) binding and, consequently, for the gamma-phosphate positioning of ATP.

Its subcellular location is the cytoplasm. The enzyme catalyses UDP-N-acetyl-alpha-D-muramoyl-L-alanyl-D-glutamate + meso-2,6-diaminopimelate + ATP = UDP-N-acetyl-alpha-D-muramoyl-L-alanyl-gamma-D-glutamyl-meso-2,6-diaminopimelate + ADP + phosphate + H(+). The protein operates within cell wall biogenesis; peptidoglycan biosynthesis. Catalyzes the addition of meso-diaminopimelic acid to the nucleotide precursor UDP-N-acetylmuramoyl-L-alanyl-D-glutamate (UMAG) in the biosynthesis of bacterial cell-wall peptidoglycan. The sequence is that of UDP-N-acetylmuramoyl-L-alanyl-D-glutamate--2,6-diaminopimelate ligase from Mycobacterium avium (strain 104).